The following is a 527-amino-acid chain: MGSEYKHILKSLCLSHGWSYAVFWRYDPINSMILRFEEAYNDEQSVALVDDMVLQAPILGQGIVGEVASSGNHQWLFSDTLFQWEHEFQNQFLCGFKILIRQFTYTQTIAIIPLGSSGVVQLGSTQKILESTEILEQTTRALQETCLKPHDSGDLDTLFESLGDCEIFPAESFQGFSFDDIFAEDNPPSLLSPEMISSEAASSNQDLTNGDDYGFDILQSYSLDDLYQLLADPPEQNCSSMVIQGVDKDLFDILGMNSQTPTMALPPKGLFSELISSSLSNNTCSSSLTNVQEYSGVNQSKRRKLDTSSAHSSSLFPQEETVTSRSLWIDDDERSSIGGNWKKPHEEGVKKKRAKAGESRRPRPKDRQMIQDRIKELRGMIPNGAKCSIDTLLDLTIKHMVFMQSLAKYAERLKQPYESKLVKEKERTWALEVGEEGVVCPIMVEELNREGEMQIEMVCEEREEFLEIGQVVRGLGLKILKGVMETRKGQIWAHFIVQAKPQVTRIQVLYSLVQLFQHHTKHDDLLS.

2 disordered regions span residues 295–318 (SGVN…LFPQ) and 335–368 (SSIG…KDRQ). Over residues 307 to 318 (TSSAHSSSLFPQ) the composition is skewed to polar residues. Positions 341–348 (WKKPHEEG) match the Nuclear localization signal motif. Residues 343 to 368 (KPHEEGVKKKRAKAGESRRPRPKDRQ) are compositionally biased toward basic and acidic residues. The region spanning 354 to 403 (AKAGESRRPRPKDRQMIQDRIKELRGMIPNGAKCSIDTLLDLTIKHMVFM) is the bHLH domain.

Belongs to the bHLH protein family. LHW subfamily. Homodimer.

It is found in the nucleus. Its function is as follows. Transcription factor that may regulate root development. The chain is Transcription factor bHLH157 (BHLH157) from Arabidopsis thaliana (Mouse-ear cress).